The primary structure comprises 237 residues: Purine nucleoside phosphorylase DeoD-type (237 aa).

His-4 lines the a purine D-ribonucleoside pocket. Phosphate contacts are provided by residues Gly-20, Arg-24, Arg-43, and 87–90 (RVGT). A purine D-ribonucleoside is bound by residues 179 to 181 (EME) and 203 to 204 (SD). The active-site Proton donor is Asp-204.

Belongs to the PNP/UDP phosphorylase family. As to quaternary structure, homohexamer; trimer of homodimers.

The catalysed reaction is a purine D-ribonucleoside + phosphate = a purine nucleobase + alpha-D-ribose 1-phosphate. The enzyme catalyses a purine 2'-deoxy-D-ribonucleoside + phosphate = a purine nucleobase + 2-deoxy-alpha-D-ribose 1-phosphate. Catalyzes the reversible phosphorolytic breakdown of the N-glycosidic bond in the beta-(deoxy)ribonucleoside molecules, with the formation of the corresponding free purine bases and pentose-1-phosphate. The protein is Purine nucleoside phosphorylase DeoD-type of Exiguobacterium sp. (strain ATCC BAA-1283 / AT1b).